A 102-amino-acid chain; its full sequence is Small ribosomal subunit protein uS10 (102 aa).

This sequence belongs to the universal ribosomal protein uS10 family. Part of the 30S ribosomal subunit.

Functionally, involved in the binding of tRNA to the ribosomes. The sequence is that of Small ribosomal subunit protein uS10 from Thermosipho melanesiensis (strain DSM 12029 / CIP 104789 / BI429).